Consider the following 248-residue polypeptide: Proteasome subunit alpha (248 aa).

N-acetylserine; partial is present on S2.

This sequence belongs to the peptidase T1A family. In terms of assembly, the 20S proteasome core is composed of 14 alpha and 14 beta subunits that assemble into four stacked heptameric rings, resulting in a barrel-shaped structure. The two inner rings, each composed of seven catalytic beta subunits, are sandwiched by two outer rings, each composed of seven alpha subunits. The catalytic chamber with the active sites is on the inside of the barrel. Has a gated structure, the ends of the cylinder being occluded by the N-termini of the alpha-subunits. Is capped by the proteasome-associated ATPase, ARC.

It localises to the cytoplasm. It functions in the pathway protein degradation; proteasomal Pup-dependent pathway. The formation of the proteasomal ATPase ARC-20S proteasome complex, likely via the docking of the C-termini of ARC into the intersubunit pockets in the alpha-rings, may trigger opening of the gate for substrate entry. Interconversion between the open-gate and close-gate conformations leads to a dynamic regulation of the 20S proteasome proteolysis activity. In terms of biological role, component of the proteasome core, a large protease complex with broad specificity involved in protein degradation. The chain is Proteasome subunit alpha from Mycobacterium tuberculosis (strain CDC 1551 / Oshkosh).